We begin with the raw amino-acid sequence, 375 residues long: Glutamate 5-kinase (375 aa).

K17 is a binding site for ATP. The substrate site is built by S57, D144, and N156. T176–D177 lines the ATP pocket. The region spanning K283 to V361 is the PUA domain.

It belongs to the glutamate 5-kinase family.

The protein localises to the cytoplasm. It catalyses the reaction L-glutamate + ATP = L-glutamyl 5-phosphate + ADP. Its pathway is amino-acid biosynthesis; L-proline biosynthesis; L-glutamate 5-semialdehyde from L-glutamate: step 1/2. Catalyzes the transfer of a phosphate group to glutamate to form L-glutamate 5-phosphate. The protein is Glutamate 5-kinase of Nitrosococcus oceani (strain ATCC 19707 / BCRC 17464 / JCM 30415 / NCIMB 11848 / C-107).